Here is a 241-residue protein sequence, read N- to C-terminus: 2,3,4,5-tetrahydropyridine-2,6-dicarboxylate N-acetyltransferase (241 aa).

Belongs to the transferase hexapeptide repeat family. DapH subfamily.

The enzyme catalyses (S)-2,3,4,5-tetrahydrodipicolinate + acetyl-CoA + H2O = L-2-acetamido-6-oxoheptanedioate + CoA. It functions in the pathway amino-acid biosynthesis; L-lysine biosynthesis via DAP pathway; LL-2,6-diaminopimelate from (S)-tetrahydrodipicolinate (acetylase route): step 1/3. In terms of biological role, catalyzes the transfer of an acetyl group from acetyl-CoA to tetrahydrodipicolinate. This chain is 2,3,4,5-tetrahydropyridine-2,6-dicarboxylate N-acetyltransferase, found in Thermoanaerobacter sp. (strain X514).